Here is a 215-residue protein sequence, read N- to C-terminus: Urease accessory protein UreG (215 aa).

24 to 31 contributes to the GTP binding site; that stretch reads GPVGSGKT.

This sequence belongs to the SIMIBI class G3E GTPase family. UreG subfamily. As to quaternary structure, homodimer. UreD, UreF and UreG form a complex that acts as a GTP-hydrolysis-dependent molecular chaperone, activating the urease apoprotein by helping to assemble the nickel containing metallocenter of UreC. The UreE protein probably delivers the nickel.

The protein localises to the cytoplasm. Facilitates the functional incorporation of the urease nickel metallocenter. This process requires GTP hydrolysis, probably effectuated by UreG. The protein is Urease accessory protein UreG of Burkholderia ambifaria (strain ATCC BAA-244 / DSM 16087 / CCUG 44356 / LMG 19182 / AMMD) (Burkholderia cepacia (strain AMMD)).